The following is a 316-amino-acid chain: Pantothenate kinase (316 aa).

An ATP-binding site is contributed by 95-102 (GSVAVGKS).

This sequence belongs to the prokaryotic pantothenate kinase family.

It is found in the cytoplasm. The enzyme catalyses (R)-pantothenate + ATP = (R)-4'-phosphopantothenate + ADP + H(+). Its pathway is cofactor biosynthesis; coenzyme A biosynthesis; CoA from (R)-pantothenate: step 1/5. This chain is Pantothenate kinase, found in Enterobacter sp. (strain 638).